The primary structure comprises 344 residues: Anthranilate phosphoribosyltransferase 2 (344 aa).

5-phospho-alpha-D-ribose 1-diphosphate-binding positions include Gly-81, 84–85 (GD), Thr-89, 91–94 (NIST), 109–117 (KHGNRALSS), and Ala-121. Residue Gly-81 participates in anthranilate binding. Ser-93 lines the Mg(2+) pocket. Residue Asn-112 coordinates anthranilate. An anthranilate-binding site is contributed by Arg-167. Mg(2+)-binding residues include Asp-226 and Glu-227.

This sequence belongs to the anthranilate phosphoribosyltransferase family. As to quaternary structure, homodimer. Mg(2+) serves as cofactor.

The catalysed reaction is N-(5-phospho-beta-D-ribosyl)anthranilate + diphosphate = 5-phospho-alpha-D-ribose 1-diphosphate + anthranilate. It participates in amino-acid biosynthesis; L-tryptophan biosynthesis; L-tryptophan from chorismate: step 2/5. Its function is as follows. Catalyzes the transfer of the phosphoribosyl group of 5-phosphorylribose-1-pyrophosphate (PRPP) to anthranilate to yield N-(5'-phosphoribosyl)-anthranilate (PRA). The sequence is that of Anthranilate phosphoribosyltransferase 2 from Ralstonia nicotianae (strain ATCC BAA-1114 / GMI1000) (Ralstonia solanacearum).